Reading from the N-terminus, the 852-residue chain is MGAFGWEQDRGAPFSGRSPRILTRMTDAPRPTAGADAPARPPAAPLVAPNFITEIIERDLEAGKYPRVVTRFPPDPSGYAHLGHVFASLLDFNTARQYGGQFNLRMDDTNPELARQEYVDSIADDLKWLGLDWGEHFYYASDYFDRYYAYAEQLIRQGDAYVESVSPEELSRLRGNATTPGTPSPYRDRSVEENLDLLRRMKAGEFADGEHVLRAKIDLTAPNMKLRDPVLYRIVNKPHFRTSDEWHIYPAYDFEHPLQDAIEGVTHSMCSLEFVDNRAIYDWLMEKLNFDPRPHQYEFGRRGLEYTITSKRKLRELVQAGRVSGWDDPRMPTLRAQRRLGVTPEAVRAFAAQIGVSRTNRTVDIAVYENAVRDDLNHRAPRVMAVLDPVKVTLTNLDGEKTLSLPYWPHDVVRDSPDGLVGMPGGGRVAPEEAVRDVPLTRELYIERDDFSPAPPKGFKRLTPGGTVRLRGAGIIRADDFGTDEAGQVTHIRATLLGEDAKAAGVIHWVSAERALPAEFRLYDRLFRVPHPEGENADVEDDSAGPAEHEAEPGAGQETAPVSQGFMRYLTPDSLRVLRGYVEPSVAGDPADTRYQFERQGYFWRDPVELERVDSREDALVFGRIITLKDTWGKQGGGTQQKAEGKKRPSTKGRGPDEVRGEGSSSPAKAHAPKAQPLTPEQDAEFTRLLGLGASEGDARTIARDPALLAFVGGAAPGDTFAQVASWTVNELVAGLRAGEVKVRAADLAPLAEGVASGQLSARIAREALARAAASGDAPLTIIEREGLNAGLSAEALQQVVAQVIAANPDKAEAYRGGKTALLGFFTGQVMRATAGKADPQALAAALKDALA.

Residues methionine 1–proline 42 form a disordered region. A glutaminyl-tRNA synthetase region spans residues methionine 1–glutamine 635. Residues alanine 28 to proline 38 show a composition bias toward low complexity. The short motif at proline 74–histidine 84 is the 'HIGH' region element. Aspartate 107 and tyrosine 252 together coordinate L-glutamine. The 'KMSKS' region signature appears at isoleucine 308–arginine 312. 2 disordered regions span residues glutamate 533–valine 562 and tryptophan 632–glutamate 681. The segment at glycine 636–alanine 852 is gatB-like. The span at serine 664–alanine 675 shows a compositional bias: low complexity.

It in the N-terminal section; belongs to the class-I aminoacyl-tRNA synthetase family. This sequence in the C-terminal section; belongs to the GatB/GatE family. Monomer.

The protein localises to the cytoplasm. It carries out the reaction tRNA(Gln) + L-glutamine + ATP = L-glutaminyl-tRNA(Gln) + AMP + diphosphate. This chain is Glutamine--tRNA ligase, found in Deinococcus radiodurans (strain ATCC 13939 / DSM 20539 / JCM 16871 / CCUG 27074 / LMG 4051 / NBRC 15346 / NCIMB 9279 / VKM B-1422 / R1).